The chain runs to 177 residues: Large ribosomal subunit protein uL6 (177 aa).

Belongs to the universal ribosomal protein uL6 family. In terms of assembly, part of the 50S ribosomal subunit.

Functionally, this protein binds to the 23S rRNA, and is important in its secondary structure. It is located near the subunit interface in the base of the L7/L12 stalk, and near the tRNA binding site of the peptidyltransferase center. This chain is Large ribosomal subunit protein uL6, found in Salmonella newport (strain SL254).